The following is a 318-amino-acid chain: Protein-L-histidine N-pros-methyltransferase (318 aa).

Positions 1 to 18 are cleaved as a signal peptide; that stretch reads MRLLAGWLCLSLASVWLA. N35 is a glycosylation site (N-linked (GlcNAc...) asparagine). Positions 174, 210, and 295 each coordinate S-adenosyl-L-homocysteine.

This sequence belongs to the METTL9 family. In terms of tissue distribution, expressed in liver, colon, small intestine, skin, kidney and to a lesser extent in spleen, lung, thymus and stomach. Not detected in fibroblast and endothelial cells.

The protein localises to the endoplasmic reticulum. Its subcellular location is the mitochondrion. The enzyme catalyses L-histidyl-[protein] + S-adenosyl-L-methionine = N(pros)-methyl-L-histidyl-[protein] + S-adenosyl-L-homocysteine + H(+). Its function is as follows. Protein-histidine N-methyltransferase that specifically catalyzes 1-methylhistidine (pros-methylhistidine) methylation of target proteins. Specifically methylates the second His of proteins with a His-x-His (HxH) motif (where 'x' is preferably a small amino acid), while exploiting the first one as a recognition signature. Catalyzes methylation of target proteins such as S100A9, NDUFB3, SLC39A5, SLC39A7, ARMC6 and DNAJB12; 1-methylhistidine modification may affect the binding of zinc and other metals to its target proteins. Constitutes the main methyltransferase for the 1-methylhistidine modification in cell. The chain is Protein-L-histidine N-pros-methyltransferase from Mus musculus (Mouse).